Reading from the N-terminus, the 239-residue chain is Norbelladine 4'-O-methyltransferase (239 aa).

Residues valine 55, glutamate 77, 79–80 (GV), serine 85, aspartate 103, and alanine 132 contribute to the S-adenosyl-L-methionine site. A divalent metal cation is bound at residue aspartate 155. Aspartate 157 serves as a coordination point for S-adenosyl-L-methionine. A divalent metal cation is bound by residues aspartate 181 and asparagine 182.

This sequence belongs to the class I-like SAM-binding methyltransferase superfamily. Cation-dependent O-methyltransferase family. The cofactor is Mg(2+). In terms of tissue distribution, highly expressed in bulbs. Detected in leaves and inflorescences.

The enzyme catalyses norbelladine + S-adenosyl-L-methionine = 4'-O-methylnorbelladine + S-adenosyl-L-homocysteine + H(+). The protein operates within alkaloid biosynthesis. 4'-O-methyltransferase converting norbelladine to 4'-O-methylnorbelladine. 4'-O-methylnorbelladine is a precursor to all Amaryllidaceae alkaloids such as galanthamine, lycorine and haemanthamine, and including haemanthamine- and crinamine-type alkaloids, promising anticancer agents. Can use norbelladine, N-methylnorbelladine and dopamine as substrate, but not caffeic acid, vanillin, 3,4-dihydroxybenzaldehyde and tyramine. In Narcissus aff. pseudonarcissus MK-2014 (Daffodil), this protein is Norbelladine 4'-O-methyltransferase.